The chain runs to 429 residues: Enolase (429 aa).

Gln166 contacts (2R)-2-phosphoglycerate. Glu208 functions as the Proton donor in the catalytic mechanism. Mg(2+) contacts are provided by Asp245, Glu289, and Asp316. (2R)-2-phosphoglycerate contacts are provided by Lys341, Arg370, Ser371, and Lys392. Residue Lys341 is the Proton acceptor of the active site.

Belongs to the enolase family. In terms of assembly, component of the RNA degradosome, a multiprotein complex involved in RNA processing and mRNA degradation. The cofactor is Mg(2+).

It localises to the cytoplasm. The protein resides in the secreted. The protein localises to the cell surface. It carries out the reaction (2R)-2-phosphoglycerate = phosphoenolpyruvate + H2O. The protein operates within carbohydrate degradation; glycolysis; pyruvate from D-glyceraldehyde 3-phosphate: step 4/5. Functionally, catalyzes the reversible conversion of 2-phosphoglycerate (2-PG) into phosphoenolpyruvate (PEP). It is essential for the degradation of carbohydrates via glycolysis. The protein is Enolase of Acinetobacter baumannii (strain AB307-0294).